The sequence spans 349 residues: 4-hydroxy-3-methylbut-2-en-1-yl diphosphate synthase (flavodoxin) (349 aa).

Cys264, Cys267, Cys299, and Glu306 together coordinate [4Fe-4S] cluster.

This sequence belongs to the IspG family. It depends on [4Fe-4S] cluster as a cofactor.

It catalyses the reaction (2E)-4-hydroxy-3-methylbut-2-enyl diphosphate + oxidized [flavodoxin] + H2O + 2 H(+) = 2-C-methyl-D-erythritol 2,4-cyclic diphosphate + reduced [flavodoxin]. Its pathway is isoprenoid biosynthesis; isopentenyl diphosphate biosynthesis via DXP pathway; isopentenyl diphosphate from 1-deoxy-D-xylulose 5-phosphate: step 5/6. In terms of biological role, converts 2C-methyl-D-erythritol 2,4-cyclodiphosphate (ME-2,4cPP) into 1-hydroxy-2-methyl-2-(E)-butenyl 4-diphosphate. This chain is 4-hydroxy-3-methylbut-2-en-1-yl diphosphate synthase (flavodoxin), found in Clostridium acetobutylicum (strain ATCC 824 / DSM 792 / JCM 1419 / IAM 19013 / LMG 5710 / NBRC 13948 / NRRL B-527 / VKM B-1787 / 2291 / W).